We begin with the raw amino-acid sequence, 279 residues long: 4-hydroxy-3-methylbut-2-enyl diphosphate reductase (279 aa).

A [4Fe-4S] cluster-binding site is contributed by Cys12. Residues His40 and His72 each coordinate (2E)-4-hydroxy-3-methylbut-2-enyl diphosphate. Residues His40 and His72 each coordinate dimethylallyl diphosphate. Isopentenyl diphosphate-binding residues include His40 and His72. Cys94 contacts [4Fe-4S] cluster. His122 contacts (2E)-4-hydroxy-3-methylbut-2-enyl diphosphate. His122 provides a ligand contact to dimethylallyl diphosphate. An isopentenyl diphosphate-binding site is contributed by His122. Glu124 serves as the catalytic Proton donor. Residue Thr161 coordinates (2E)-4-hydroxy-3-methylbut-2-enyl diphosphate. Cys189 provides a ligand contact to [4Fe-4S] cluster. Residues Ser217, Asn219, and Ser261 each contribute to the (2E)-4-hydroxy-3-methylbut-2-enyl diphosphate site. Dimethylallyl diphosphate-binding residues include Ser217, Asn219, and Ser261. Isopentenyl diphosphate contacts are provided by Ser217, Asn219, and Ser261.

The protein belongs to the IspH family. The cofactor is [4Fe-4S] cluster.

It carries out the reaction isopentenyl diphosphate + 2 oxidized [2Fe-2S]-[ferredoxin] + H2O = (2E)-4-hydroxy-3-methylbut-2-enyl diphosphate + 2 reduced [2Fe-2S]-[ferredoxin] + 2 H(+). The enzyme catalyses dimethylallyl diphosphate + 2 oxidized [2Fe-2S]-[ferredoxin] + H2O = (2E)-4-hydroxy-3-methylbut-2-enyl diphosphate + 2 reduced [2Fe-2S]-[ferredoxin] + 2 H(+). It functions in the pathway isoprenoid biosynthesis; dimethylallyl diphosphate biosynthesis; dimethylallyl diphosphate from (2E)-4-hydroxy-3-methylbutenyl diphosphate: step 1/1. Its pathway is isoprenoid biosynthesis; isopentenyl diphosphate biosynthesis via DXP pathway; isopentenyl diphosphate from 1-deoxy-D-xylulose 5-phosphate: step 6/6. Its function is as follows. Catalyzes the conversion of 1-hydroxy-2-methyl-2-(E)-butenyl 4-diphosphate (HMBPP) into a mixture of isopentenyl diphosphate (IPP) and dimethylallyl diphosphate (DMAPP). Acts in the terminal step of the DOXP/MEP pathway for isoprenoid precursor biosynthesis. The chain is 4-hydroxy-3-methylbut-2-enyl diphosphate reductase from Syntrophotalea carbinolica (strain DSM 2380 / NBRC 103641 / GraBd1) (Pelobacter carbinolicus).